We begin with the raw amino-acid sequence, 471 residues long: MNFGKVIQVIGPVVDIQFPPGQLPEIYNAIKIRSADQENYQGSFEIDITLEAAQHLGNNAVRCVAMSSTDGLMRGMKALDTGAPISVPVGAEILGRMFNVLGDPIDEAGQVAAKEVWPIHRKAPTFENLEPSTEVLETGIKVIDLLAPYAKGGKVGLFGGAGVGKTVLIQELINNIAMEYSGYSVFAGVGERTREGNDLYNEFKESGILKNVAMVFGQMNEPPGARMRVALSGLVMAEYFRDVQNQDVLLFIDNIFRFTQAGSEVSALLGRMPSAVGYQPTLSTEMGQLQERITSTKNGSITSVQAIYVPADDLTDPAPATAFAHLDATTVLSRAIAELGIYPAVDPLDSTSRILDPHVVGDEHYSVARGVQKILQRYKELQDIIAILGMDELSEDDKIVVARARKIQRFLSQPFHVAEAFTGTPGKFVPLKESIRGFKEILEGKHDDLPESAFYMVGTIEEAVAKAKEMA.

159 to 166 (GGAGVGKT) contributes to the ATP binding site.

This sequence belongs to the ATPase alpha/beta chains family. F-type ATPases have 2 components, CF(1) - the catalytic core - and CF(0) - the membrane proton channel. CF(1) has five subunits: alpha(3), beta(3), gamma(1), delta(1), epsilon(1). CF(0) has four main subunits: a(1), b(1), b'(1) and c(9-12).

The protein localises to the cell membrane. It carries out the reaction ATP + H2O + 4 H(+)(in) = ADP + phosphate + 5 H(+)(out). Functionally, produces ATP from ADP in the presence of a proton gradient across the membrane. The catalytic sites are hosted primarily by the beta subunits. This is ATP synthase subunit beta from Heliobacterium modesticaldum (strain ATCC 51547 / Ice1).